The primary structure comprises 223 residues: Ubiquitin carboxyl-terminal hydrolase isozyme L1 (223 aa).

N-acetylmethionine is present on Met1. In terms of domain architecture, UCH catalytic spans 2–221 (QLKPMEINPE…VRFSAVALCK (220 aa)). Residues 5–10 (PMEINP) are interaction with ubiquitin. Cys90 serves as the catalytic Nucleophile. Ser125 bears the Phosphoserine mark. His161 acts as the Proton donor in catalysis. The interval 211–216 (EVRFSA) is interaction with ubiquitin. A lipid anchor (S-farnesyl cysteine) is attached at Cys220. Residues 221–223 (KAA) constitute a propeptide, removed in mature form.

This sequence belongs to the peptidase C12 family. Monomer. Homodimer. Interacts with SNCA. Interacts with COPS5. In terms of processing, O-glycosylated. In terms of tissue distribution, found in neuronal cell bodies and processes throughout the neocortex (at protein level). Expressed in neurons and cells of the diffuse neuroendocrine system and their tumors. Weakly expressed in ovary. Down-regulated in brains from Parkinson disease and Alzheimer disease patients.

It is found in the cytoplasm. Its subcellular location is the endoplasmic reticulum membrane. The catalysed reaction is Thiol-dependent hydrolysis of ester, thioester, amide, peptide and isopeptide bonds formed by the C-terminal Gly of ubiquitin (a 76-residue protein attached to proteins as an intracellular targeting signal).. Its function is as follows. Deubiquitinase that plays a role in the regulation of several processes such as maintenance of synaptic function, cardiac function, inflammatory response or osteoclastogenesis. Abrogates the ubiquitination of multiple proteins including WWTR1/TAZ, EGFR, HIF1A and beta-site amyloid precursor protein cleaving enzyme 1/BACE1. In addition, recognizes and hydrolyzes a peptide bond at the C-terminal glycine of ubiquitin to maintain a stable pool of monoubiquitin that is a key requirement for the ubiquitin-proteasome and the autophagy-lysosome pathways. Regulates amyloid precursor protein/APP processing by promoting BACE1 degradation resulting in decreased amyloid beta production. Plays a role in the immune response by regulating the ability of MHC I molecules to reach cross-presentation compartments competent for generating Ag-MHC I complexes. Mediates the 'Lys-48'-linked deubiquitination of the transcriptional coactivator WWTR1/TAZ leading to its stabilization and inhibition of osteoclastogenesis. Deubiquitinates and stabilizes epidermal growth factor receptor EGFR to prevent its degradation and to activate its downstream mediators. Modulates oxidative activity in skeletal muscle by regulating key mitochondrial oxidative proteins. Enhances the activity of hypoxia-inducible factor 1-alpha/HIF1A by abrogateing its VHL E3 ligase-mediated ubiquitination and consequently inhibiting its degradation. This Homo sapiens (Human) protein is Ubiquitin carboxyl-terminal hydrolase isozyme L1 (UCHL1).